The following is a 358-amino-acid chain: Chondroadherin (358 aa).

The N-terminal stretch at Met1–Ala20 is a signal peptide. In terms of domain architecture, LRRNT spans Ala21–Glu50. Residues Cys22 and Cys37 are joined by a disulfide bond. LRR repeat units lie at residues Thr51 to Thr72, Asn75 to Gly96, Gln99 to Asp120, Glu123 to Pro144, Asn147 to Gly168, Asp171 to Asp192, Asn195 to Lys216, Val219 to Ser240, Tyr244 to Gly265, and Thr268 to Asp289. The O-linked (GalNAc...) serine glycan is linked to Ser143. One can recognise an LRRCT domain in the interval Asn299–Ser347. 2 disulfide bridges follow: Cys303–Cys345 and Cys305–Cys325. Positions Pro321–His358 are disordered. The span at Pro348 to His358 shows a compositional bias: basic residues.

It belongs to the small leucine-rich proteoglycan (SLRP) family. SLRP class IV subfamily. In terms of assembly, mostly monomeric. In terms of tissue distribution, present in femoral head and rib cartilage, as well as in tendon. Detected in bone marrow.

It localises to the secreted. It is found in the extracellular space. The protein localises to the extracellular matrix. Promotes attachment of chondrocytes, fibroblasts, and osteoblasts. This binding is mediated (at least for chondrocytes and fibroblasts) by the integrin alpha(2)beta(1). May play an important role in the regulation of chondrocyte growth and proliferation. The sequence is that of Chondroadherin (Chad) from Rattus norvegicus (Rat).